We begin with the raw amino-acid sequence, 259 residues long: Thiazole synthase (259 aa).

Residue K100 is the Schiff-base intermediate with DXP of the active site. 1-deoxy-D-xylulose 5-phosphate is bound by residues G161, A187–G188, and N209–T210.

This sequence belongs to the ThiG family. Homotetramer. Forms heterodimers with either ThiH or ThiS.

The protein localises to the cytoplasm. The enzyme catalyses [ThiS sulfur-carrier protein]-C-terminal-Gly-aminoethanethioate + 2-iminoacetate + 1-deoxy-D-xylulose 5-phosphate = [ThiS sulfur-carrier protein]-C-terminal Gly-Gly + 2-[(2R,5Z)-2-carboxy-4-methylthiazol-5(2H)-ylidene]ethyl phosphate + 2 H2O + H(+). It functions in the pathway cofactor biosynthesis; thiamine diphosphate biosynthesis. In terms of biological role, catalyzes the rearrangement of 1-deoxy-D-xylulose 5-phosphate (DXP) to produce the thiazole phosphate moiety of thiamine. Sulfur is provided by the thiocarboxylate moiety of the carrier protein ThiS. In vitro, sulfur can be provided by H(2)S. This is Thiazole synthase from Methylobacillus flagellatus (strain ATCC 51484 / DSM 6875 / VKM B-1610 / KT).